Here is a 319-residue protein sequence, read N- to C-terminus: ATP-dependent 6-phosphofructokinase (319 aa).

G11 serves as a coordination point for ATP. Residue 21–25 (RAVVR) participates in ADP binding. ATP-binding positions include 72 to 73 (RY) and 102 to 105 (GDGS). D103 is a Mg(2+) binding site. 125–127 (TID) contacts substrate. The Proton acceptor role is filled by D127. R154 is a binding site for ADP. Substrate is bound by residues R162 and 169–171 (MGR). Residues 185–187 (GAE), R211, and 213–215 (KKH) contribute to the ADP site. Substrate is bound by residues E222, R243, and 249 to 252 (HVQR).

The protein belongs to the phosphofructokinase type A (PFKA) family. ATP-dependent PFK group I subfamily. Prokaryotic clade 'B1' sub-subfamily. Homotetramer. Mg(2+) serves as cofactor.

The protein localises to the cytoplasm. It catalyses the reaction beta-D-fructose 6-phosphate + ATP = beta-D-fructose 1,6-bisphosphate + ADP + H(+). It functions in the pathway carbohydrate degradation; glycolysis; D-glyceraldehyde 3-phosphate and glycerone phosphate from D-glucose: step 3/4. With respect to regulation, allosterically activated by ADP and other diphosphonucleosides, and allosterically inhibited by phosphoenolpyruvate. In terms of biological role, catalyzes the phosphorylation of D-fructose 6-phosphate to fructose 1,6-bisphosphate by ATP, the first committing step of glycolysis. In Listeria welshimeri serovar 6b (strain ATCC 35897 / DSM 20650 / CCUG 15529 / CIP 8149 / NCTC 11857 / SLCC 5334 / V8), this protein is ATP-dependent 6-phosphofructokinase.